The sequence spans 702 residues: Polyribonucleotide nucleotidyltransferase (702 aa).

The Mg(2+) site is built by Asp-484 and Asp-490. A KH domain is found at 551–610 (PHIESFKIAVEKIGALIGPGGKTVKSLSDQYRVTINTDSDGTVTVSGRDAQSVFDAKVAV). Residues 620-688 (GRVYQGVVKR…RMGRLNLSYI (69 aa)) form the S1 motif domain.

The protein belongs to the polyribonucleotide nucleotidyltransferase family. The cofactor is Mg(2+).

It localises to the cytoplasm. It carries out the reaction RNA(n+1) + phosphate = RNA(n) + a ribonucleoside 5'-diphosphate. Functionally, involved in mRNA degradation. Catalyzes the phosphorolysis of single-stranded polyribonucleotides processively in the 3'- to 5'-direction. This Treponema pallidum (strain Nichols) protein is Polyribonucleotide nucleotidyltransferase.